A 331-amino-acid polypeptide reads, in one-letter code: Ketol-acid reductoisomerase (NADP(+)) (331 aa).

Positions 2 to 182 constitute a KARI N-terminal Rossmann domain; that stretch reads AQLFYDSDAD…GGTRAGILET (181 aa). Residues 25–28, Ser51, Ser53, and 83–86 contribute to the NADP(+) site; these read YGSQ and DEFQ. The active site involves His108. Position 134 (Gly134) interacts with NADP(+). In terms of domain architecture, KARI C-terminal knotted spans 183–328; sequence NFKEETETDL…KGLRAMFSWL (146 aa). The Mg(2+) site is built by Asp191, Glu195, Glu227, and Glu231. Ser252 lines the substrate pocket.

The protein belongs to the ketol-acid reductoisomerase family. Requires Mg(2+) as cofactor.

It carries out the reaction (2R)-2,3-dihydroxy-3-methylbutanoate + NADP(+) = (2S)-2-acetolactate + NADPH + H(+). The enzyme catalyses (2R,3R)-2,3-dihydroxy-3-methylpentanoate + NADP(+) = (S)-2-ethyl-2-hydroxy-3-oxobutanoate + NADPH + H(+). It participates in amino-acid biosynthesis; L-isoleucine biosynthesis; L-isoleucine from 2-oxobutanoate: step 2/4. Its pathway is amino-acid biosynthesis; L-valine biosynthesis; L-valine from pyruvate: step 2/4. Functionally, involved in the biosynthesis of branched-chain amino acids (BCAA). Catalyzes an alkyl-migration followed by a ketol-acid reduction of (S)-2-acetolactate (S2AL) to yield (R)-2,3-dihydroxy-isovalerate. In the isomerase reaction, S2AL is rearranged via a Mg-dependent methyl migration to produce 3-hydroxy-3-methyl-2-ketobutyrate (HMKB). In the reductase reaction, this 2-ketoacid undergoes a metal-dependent reduction by NADPH to yield (R)-2,3-dihydroxy-isovalerate. The sequence is that of Ketol-acid reductoisomerase (NADP(+)) from Prochlorococcus marinus (strain MIT 9313).